The following is a 425-amino-acid chain: Serine--tRNA ligase (425 aa).

L-serine is bound at residue 230–232; that stretch reads TAE. 261–263 contacts ATP; sequence RSE. Glu-284 is a binding site for L-serine. 348 to 351 provides a ligand contact to ATP; sequence EISS. Ser-384 is a binding site for L-serine.

This sequence belongs to the class-II aminoacyl-tRNA synthetase family. Type-1 seryl-tRNA synthetase subfamily. In terms of assembly, homodimer. The tRNA molecule binds across the dimer.

The protein localises to the cytoplasm. It carries out the reaction tRNA(Ser) + L-serine + ATP = L-seryl-tRNA(Ser) + AMP + diphosphate + H(+). The catalysed reaction is tRNA(Sec) + L-serine + ATP = L-seryl-tRNA(Sec) + AMP + diphosphate + H(+). It participates in aminoacyl-tRNA biosynthesis; selenocysteinyl-tRNA(Sec) biosynthesis; L-seryl-tRNA(Sec) from L-serine and tRNA(Sec): step 1/1. Its function is as follows. Catalyzes the attachment of serine to tRNA(Ser). Is also able to aminoacylate tRNA(Sec) with serine, to form the misacylated tRNA L-seryl-tRNA(Sec), which will be further converted into selenocysteinyl-tRNA(Sec). The sequence is that of Serine--tRNA ligase from Streptococcus pyogenes serotype M12 (strain MGAS2096).